Consider the following 433-residue polypeptide: uncharacterized protein (433 aa).

Positions 258-304 form a coiled coil; sequence KNIKSKLLLELRQLKNNITNLQNKITKTMDNVKKIIEEIEQSKNKVT.

This sequence belongs to the mimivirus R160 family.

The protein localises to the virion. This is an uncharacterized protein from Acanthamoeba polyphaga mimivirus (APMV).